The chain runs to 65 residues: Conotoxin Lp5.1 (65 aa).

An N-terminal signal peptide occupies residues 1–22 (MRCVPVFIILLLLIPSAPSVDA). A propeptide spanning residues 23-50 (QRKTKDDVPLASFHDNAKRTLKRLWNKR) is cleaved from the precursor.

Belongs to the conotoxin T superfamily. Contains 2 disulfide bonds that can be either 'C1-C3, C2-C4' or 'C1-C4, C2-C3', since these disulfide connectivities have been observed for conotoxins with cysteine framework V (for examples, see AC P0DQQ7 and AC P81755). In terms of tissue distribution, expressed by the venom duct.

The protein localises to the secreted. This chain is Conotoxin Lp5.1, found in Conus leopardus (Leopard cone).